A 413-amino-acid chain; its full sequence is DnaJ protein homolog xdj1 (413 aa).

The region spanning 6 to 73 (KLYDILEVHF…ESREMYDMYG (68 aa)) is the J domain. A CR-type zinc finger spans residues 134–219 (GKEVKLRATR…CKGSGTVPEQ (86 aa)). CXXCXGXG motif repeat units follow at residues 147 to 154 (CPRCQGRG), 164 to 171 (CLSCDGKG), 191 to 198 (CDTCNGKG), and 207 to 214 (CKHCKGSG). At Cys410 the chain carries Cysteine methyl ester. Cys410 carries the S-farnesyl cysteine lipid modification. The propeptide at 411–413 (QAQ) is removed in mature form.

The protein resides in the endoplasmic reticulum membrane. This is DnaJ protein homolog xdj1 (xdj1) from Schizosaccharomyces pombe (strain 972 / ATCC 24843) (Fission yeast).